We begin with the raw amino-acid sequence, 153 residues long: Nucleoside diphosphate kinase (153 aa).

Lys12, Phe60, Arg88, Thr94, Arg105, and Asn115 together coordinate ATP. His118 serves as the catalytic Pros-phosphohistidine intermediate.

It belongs to the NDK family. Requires Mg(2+) as cofactor.

It is found in the cytoplasm. The catalysed reaction is a 2'-deoxyribonucleoside 5'-diphosphate + ATP = a 2'-deoxyribonucleoside 5'-triphosphate + ADP. The enzyme catalyses a ribonucleoside 5'-diphosphate + ATP = a ribonucleoside 5'-triphosphate + ADP. Major role in the synthesis of nucleoside triphosphates other than ATP. The ATP gamma phosphate is transferred to the NDP beta phosphate via a ping-pong mechanism, using a phosphorylated active-site intermediate. The polypeptide is Nucleoside diphosphate kinase (Natronomonas pharaonis (strain ATCC 35678 / DSM 2160 / CIP 103997 / JCM 8858 / NBRC 14720 / NCIMB 2260 / Gabara) (Halobacterium pharaonis)).